We begin with the raw amino-acid sequence, 60 residues long: UPF0434 protein KPK_3615 (60 aa).

It belongs to the UPF0434 family.

The protein is UPF0434 protein KPK_3615 of Klebsiella pneumoniae (strain 342).